The following is a 116-amino-acid chain: Large ribosomal subunit protein bL17 (116 aa).

Belongs to the bacterial ribosomal protein bL17 family. In terms of assembly, part of the 50S ribosomal subunit. Contacts protein L32.

This is Large ribosomal subunit protein bL17 from Sulfurimonas denitrificans (strain ATCC 33889 / DSM 1251) (Thiomicrospira denitrificans (strain ATCC 33889 / DSM 1251)).